A 351-amino-acid polypeptide reads, in one-letter code: MAKIAVFFGGSSTEHSISILTGCFICKTLHTMGHSVKPILLTKDGGWVVPSEYRMSIPFEVSNSPDLFQEEFQKRYGVSRTNQIFSLDADIAFLGLHGGQGEDGTIQGFLEILGIPYTGSGVLASAIAMDKTRANQIFLQSGQKVAPFFEIDKLEYLNSTDAVITKLETLGFPQFLKPVEGGSSVSVYKITNREQLKEKLALIFESDSKVMSQSFLTGIEVSCGVLERYRDGKFKKIALPATEIVPGGEFFDFESKYKQGGSHEITPARISEQEMKRVQELAIAAHRSLGCSGYSRTDFIIVNGEPHILETNTLPGMTETSLIPQQAKAAGISMEEVFSDLIEIGLKRSLY.

The region spanning 135-343 is the ATP-grasp domain; it reads NQIFLQSGQK…MEEVFSDLIE (209 aa). 167-222 serves as a coordination point for ATP; it reads LETLGFPQFLKPVEGGSSVSVYKITNREQLKEKLALIFESDSKVMSQSFLTGIEVS. Residues Asp298, Glu310, and Asn312 each coordinate Mg(2+).

It belongs to the D-alanine--D-alanine ligase family. It depends on Mg(2+) as a cofactor. Mn(2+) is required as a cofactor.

The protein localises to the cytoplasm. It catalyses the reaction 2 D-alanine + ATP = D-alanyl-D-alanine + ADP + phosphate + H(+). Its pathway is cell wall biogenesis; peptidoglycan biosynthesis. In terms of biological role, cell wall formation. The chain is D-alanine--D-alanine ligase from Leptospira interrogans serogroup Icterohaemorrhagiae serovar copenhageni (strain Fiocruz L1-130).